We begin with the raw amino-acid sequence, 64 residues long: Large ribosomal subunit protein uL30 (64 aa).

The protein belongs to the universal ribosomal protein uL30 family. In terms of assembly, part of the 50S ribosomal subunit.

In Methylorubrum extorquens (strain CM4 / NCIMB 13688) (Methylobacterium extorquens), this protein is Large ribosomal subunit protein uL30.